We begin with the raw amino-acid sequence, 96 residues long: Uteroglobin (96 aa).

The N-terminal stretch at 1-21 is a signal peptide; sequence MKIAITMAVVMLSVCCSSASS.

This sequence belongs to the secretoglobin family. As to quaternary structure, antiparallel homodimer; disulfide-linked. Interaction with LMBR1L is controversial.

It localises to the secreted. Binds phosphatidylcholine, phosphatidylinositol, polychlorinated biphenyls (PCB) and weakly progesterone, potent inhibitor of phospholipase A2. The polypeptide is Uteroglobin (SCGB1A1) (Mesocricetus auratus (Golden hamster)).